Reading from the N-terminus, the 251-residue chain is Aliphatic sulfonates import ATP-binding protein SsuB (251 aa).

An ABC transporter domain is found at 19 to 238 (GELRHVDKWY…PGEPGAHTER (220 aa)). 51-58 (GRSGSGKS) is an ATP binding site.

The protein belongs to the ABC transporter superfamily. Aliphatic sulfonates importer (TC 3.A.1.17.2) family. As to quaternary structure, the complex is composed of two ATP-binding proteins (SsuB), two transmembrane proteins (SsuC) and a solute-binding protein (SsuA).

Its subcellular location is the cell membrane. The enzyme catalyses ATP + H2O + aliphatic sulfonate-[sulfonate-binding protein]Side 1 = ADP + phosphate + aliphatic sulfonateSide 2 + [sulfonate-binding protein]Side 1.. Its function is as follows. Part of the ABC transporter complex SsuABC involved in aliphatic sulfonates import. Responsible for energy coupling to the transport system. The sequence is that of Aliphatic sulfonates import ATP-binding protein SsuB from Mycobacterium avium (strain 104).